We begin with the raw amino-acid sequence, 195 residues long: Probable GTP-binding protein EngB (195 aa).

The EngB-type G domain occupies 24–195 (DIPEIALAGR…AAWDAILSKI (172 aa)). Residues 32–39 (GRSNVGKS), 59–63 (GKTQL), 77–80 (DVPG), 144–147 (TKAD), and 176–178 (FSS) each bind GTP. Positions 39 and 61 each coordinate Mg(2+).

Belongs to the TRAFAC class TrmE-Era-EngA-EngB-Septin-like GTPase superfamily. EngB GTPase family. Mg(2+) is required as a cofactor.

Functionally, necessary for normal cell division and for the maintenance of normal septation. In Streptococcus sanguinis (strain SK36), this protein is Probable GTP-binding protein EngB.